We begin with the raw amino-acid sequence, 396 residues long: Tryptophan synthase beta chain (396 aa).

An N6-(pyridoxal phosphate)lysine modification is found at Lys-86.

Belongs to the TrpB family. In terms of assembly, tetramer of two alpha and two beta chains. Pyridoxal 5'-phosphate is required as a cofactor.

It catalyses the reaction (1S,2R)-1-C-(indol-3-yl)glycerol 3-phosphate + L-serine = D-glyceraldehyde 3-phosphate + L-tryptophan + H2O. It participates in amino-acid biosynthesis; L-tryptophan biosynthesis; L-tryptophan from chorismate: step 5/5. The beta subunit is responsible for the synthesis of L-tryptophan from indole and L-serine. The chain is Tryptophan synthase beta chain from Serratia proteamaculans (strain 568).